The chain runs to 232 residues: Orotate phosphoribosyltransferase (232 aa).

5-phospho-alpha-D-ribose 1-diphosphate is bound by residues Arg-107, Lys-108, Lys-111, His-113, and 133-141 (EDLTTAGGS). Thr-137 contacts orotate.

This sequence belongs to the purine/pyrimidine phosphoribosyltransferase family. PyrE subfamily. In terms of assembly, homodimer. It depends on Mg(2+) as a cofactor.

It carries out the reaction orotidine 5'-phosphate + diphosphate = orotate + 5-phospho-alpha-D-ribose 1-diphosphate. Its pathway is pyrimidine metabolism; UMP biosynthesis via de novo pathway; UMP from orotate: step 1/2. Its function is as follows. Catalyzes the transfer of a ribosyl phosphate group from 5-phosphoribose 1-diphosphate to orotate, leading to the formation of orotidine monophosphate (OMP). The chain is Orotate phosphoribosyltransferase from Sinorhizobium medicae (strain WSM419) (Ensifer medicae).